Here is a 123-residue protein sequence, read N- to C-terminus: Ig heavy chain V region H8 (123 aa).

Residues 1 to 114 (EVKLVESGGG…BSYWYFDVWG (114 aa)) form the Ig-like domain.

The polypeptide is Ig heavy chain V region H8 (Mus musculus (Mouse)).